The primary structure comprises 735 residues: Protein STRUBBELIG-RECEPTOR FAMILY 2 (735 aa).

Residues 1 to 23 (MKTKQQLRFLATILLTTILFVLA) form the signal peptide. Over 24-297 (KTDTDPLEVL…KKKKKGIGAG (274 aa)) the chain is Extracellular. LRR repeat units lie at residues 78–94 (LRELKLLGSLGNQLQHL), 96–119 (NLKILDVSFNNLEGEIPFGLPPNA), 120–140 (THINMAYNNLTQSIPFSLPLM), 142–163 (SLQSLNLSHNSLSGPLGNVFSG), 165–187 (QIKEMDLSFNNLTGDLPSSFGTL), 189–211 (NLTSLYLQNNRLTGSVIYLADLP), 212–232 (LADLNIEDNQFSGIIPSHFQS), and 233–253 (IPHLWIWGNKFHVEPNYKPWK). Residues asparagine 118, asparagine 128, asparagine 147, asparagine 175, and asparagine 189 are each glycosylated (N-linked (GlcNAc...) asparagine). N-linked (GlcNAc...) asparagine glycosylation is present at asparagine 264. A helical membrane pass occupies residues 298–318 (STFLLVGGLALLGTFFALFAV). At 319-735 (RMNHRRAQNL…SSPTFSYLSS (417 aa)) the chain is on the cytoplasmic side. A disordered region spans residues 358–378 (PQIKRFQPPPAPQLRHLPSPP). The Protein kinase domain occupies 415-695 (FSEENLLGEG…EIVEALTALI (281 aa)).

Belongs to the protein kinase superfamily. Ser/Thr protein kinase family. Expressed in seedlings, roots, stems, leaves, flowers and siliques.

It is found in the membrane. This Arabidopsis thaliana (Mouse-ear cress) protein is Protein STRUBBELIG-RECEPTOR FAMILY 2 (SRF2).